The sequence spans 1538 residues: Myosin-9 (1538 aa).

A Myosin N-terminal SH3-like domain is found at 16–65 (SIGSHVWFEDPEVAWIDGEVEKINGQEVVIQATTGKKVTAKLSKIYPKDV). The 671-residue stretch at 70–740 (GGVDDMTKLS…QMAELDARRA (671 aa)) folds into the Myosin motor domain. Residues 164-171 (GESGAGKT) and 217-225 (NNNSSRFGK) each bind ATP. Actin-binding stretches follow at residues 503–537 (LIEK…YQTF), 539–562 (THKR…AGEV), 597–621 (FPPL…KLQL), and 621–643 (LQQL…KPNN). 6 IQ domains span residues 743-772 (LSSA…ATIS), 766-795 (LRKA…EAAA), 791-820 (REAA…ASLV), 814-843 (LHVA…TKAA), 839-868 (QTKA…GVVL), and 862-891 (LKNG…AARE). Residues 892 to 1064 (TGALKEAKDM…VLRQQAVSMA (173 aa)) adopt a coiled-coil conformation. Residues 1017–1032 (SLEDKKKKLEETEKKG) show a composition bias toward basic and acidic residues. 2 disordered regions span residues 1017-1041 (SLED…SLTR) and 1098-1121 (SHSI…NEKQ). The region spanning 1168–1481 (DRIIQTIGHA…IANMRVLMTE (314 aa)) is the Dilute domain.

The protein belongs to the TRAFAC class myosin-kinesin ATPase superfamily. Myosin family. Plant myosin class XI subfamily. In terms of assembly, homodimer.

Myosin heavy chain that is required for the cell cycle-regulated transport of various organelles and proteins for their segregation. Functions by binding with its tail domain to receptor proteins on organelles and exerting force with its N-terminal motor domain against actin filaments, thereby transporting its cargo along polarized actin cables. Involved in trafficking of Golgi stacks and mitochondria. The polypeptide is Myosin-9 (XI-C) (Arabidopsis thaliana (Mouse-ear cress)).